The following is a 395-amino-acid chain: uncharacterized protein (395 aa).

12 consecutive transmembrane segments (helical) span residues 12–34 (LLAS…TIYL), 44–66 (LIGY…FGIL), 75–94 (YMLL…TLVN), 99–121 (VVLF…KAWF), 134–156 (FSIN…TLLV), 160–182 (INLP…QIWV), 208–230 (LLWF…SCIS), 245–264 (VVAV…QYSV), 271–293 (ANIR…GFIF), 298–320 (LLLW…PGEY), 341–360 (LGWL…LTSL), and 364–381 (SLFV…VLML).

Belongs to the major facilitator superfamily.

The protein resides in the cell inner membrane. A transporter able to export peptides. When overexpressed, allows cells deleted for multiple peptidases (pepA, pepB, pepD and pepN) to grow in the presence of dipeptides Ala-Gln or Gly-Tyr which otherwise inhibit growth. Cells overexpressing this protein have decreased intracellular levels of Ala-Gln dipeptide, and in a system that produces the Ala-Gln dipeptide overproduction of this protein increases export of the dipeptide. This is an uncharacterized protein from Escherichia coli (strain K12).